An 844-amino-acid chain; its full sequence is Elongation factor 2 (844 aa).

Positions Thr17 to Lys255 constitute a tr-type G domain. Residue Ala26–Ser33 coordinates GTP. Phosphothreonine occurs at positions 57 and 59. Residues Asn160 to Asp163 and Ser215 to Leu217 each bind GTP. His700 bears the Diphthamide mark.

The protein belongs to the TRAFAC class translation factor GTPase superfamily. Classic translation factor GTPase family. EF-G/EF-2 subfamily.

It is found in the cytoplasm. The catalysed reaction is GTP + H2O = GDP + phosphate + H(+). Its function is as follows. Catalyzes the GTP-dependent ribosomal translocation step during translation elongation. During this step, the ribosome changes from the pre-translocational (PRE) to the post-translocational (POST) state as the newly formed A-site-bound peptidyl-tRNA and P-site-bound deacylated tRNA move to the P and E sites, respectively. Catalyzes the coordinated movement of the two tRNA molecules, the mRNA and conformational changes in the ribosome. This chain is Elongation factor 2 (cot-3), found in Neurospora crassa (strain ATCC 24698 / 74-OR23-1A / CBS 708.71 / DSM 1257 / FGSC 987).